The following is a 356-amino-acid chain: Zinc finger CCCH domain-containing protein 49 (356 aa).

C3H1-type zinc fingers lie at residues 120-146 (YSGTACPDFRKGGCKKGDSCEFAHGVF) and 155-177 (YRTQPCKDGGNCLRKICFFAHSP). Residues 209-235 (ISPVSGSPPMSPRADSESSPMTQSLSR) are disordered. Residues 225-235 (ESSPMTQSLSR) show a composition bias toward polar residues.

In Arabidopsis thaliana (Mouse-ear cress), this protein is Zinc finger CCCH domain-containing protein 49.